The following is a 129-amino-acid chain: Glycine cleavage system H protein (129 aa).

Positions 24–106 (TFTVGITEHA…FGDGWLFRIK (83 aa)) constitute a Lipoyl-binding domain. At K65 the chain carries N6-lipoyllysine.

It belongs to the GcvH family. In terms of assembly, the glycine cleavage system is composed of four proteins: P, T, L and H. It depends on (R)-lipoate as a cofactor.

Its function is as follows. The glycine cleavage system catalyzes the degradation of glycine. The H protein shuttles the methylamine group of glycine from the P protein to the T protein. The protein is Glycine cleavage system H protein of Pseudoalteromonas translucida (strain TAC 125).